A 295-amino-acid chain; its full sequence is Elongation factor Ts (295 aa).

Positions 79-82 are involved in Mg(2+) ion dislocation from EF-Tu; the sequence is TDFV.

It belongs to the EF-Ts family.

Its subcellular location is the cytoplasm. Its function is as follows. Associates with the EF-Tu.GDP complex and induces the exchange of GDP to GTP. It remains bound to the aminoacyl-tRNA.EF-Tu.GTP complex up to the GTP hydrolysis stage on the ribosome. The sequence is that of Elongation factor Ts from Bacillus cereus (strain G9842).